An 874-amino-acid chain; its full sequence is Alanine--tRNA ligase (874 aa).

H563, H567, C665, and H669 together coordinate Zn(2+).

The protein belongs to the class-II aminoacyl-tRNA synthetase family. It depends on Zn(2+) as a cofactor.

The protein localises to the cytoplasm. The catalysed reaction is tRNA(Ala) + L-alanine + ATP = L-alanyl-tRNA(Ala) + AMP + diphosphate. Functionally, catalyzes the attachment of alanine to tRNA(Ala) in a two-step reaction: alanine is first activated by ATP to form Ala-AMP and then transferred to the acceptor end of tRNA(Ala). Also edits incorrectly charged Ser-tRNA(Ala) and Gly-tRNA(Ala) via its editing domain. The sequence is that of Alanine--tRNA ligase from Haemophilus influenzae (strain 86-028NP).